The following is a 169-amino-acid chain: Allophycocyanin subunit beta-18 (169 aa).

Residue Asn72 is modified to N4-methylasparagine. Cys82 contributes to the (2R,3E)-phycocyanobilin binding site.

Belongs to the phycobiliprotein family. As to quaternary structure, heterodimer of an alpha and a beta chain. In terms of processing, contains one covalently linked phycocyanobilin chromophore.

It localises to the plastid. Its subcellular location is the cyanelle thylakoid membrane. Functionally, light-harvesting photosynthetic bile pigment-protein from the phycobiliprotein complex. Allophycocyanin has a maximum absorption at approximately 650 nanometers. This Cyanophora paradoxa protein is Allophycocyanin subunit beta-18 (apcF).